Here is an 880-residue protein sequence, read N- to C-terminus: Paramyosin (880 aa).

The nonhelical region stretch occupies residues 1–34 (MSGSLYRSPSAALYKSPSMSAFGGLPAAFGSMSV). A coiled-coil region spans residues 35-859 (ADLGSLTRLE…LIRAKHRHQL (825 aa)). The nonhelical region stretch occupies residues 860–880 (LRAKMLQRQKFTFSKMSNRDN).

The protein belongs to the paramyosin family. In terms of assembly, homodimer.

The protein resides in the cytoplasm. It is found in the myofibril. Paramyosin is a major structural component of many thick filaments isolated from invertebrate muscles. This is Paramyosin from Brugia malayi (Filarial nematode worm).